A 990-amino-acid chain; its full sequence is Aconitate hydratase 3, mitochondrial (990 aa).

Residues 1–78 (MYLTASSSAS…PFRFTSQIRA (78 aa)) constitute a mitochondrion transit peptide. Ser-91 is modified (phosphoserine). Residues Gln-182 and 301–303 (DSH) each bind substrate. The [4Fe-4S] cluster site is built by Cys-533, Cys-599, and Cys-602. Substrate contacts are provided by residues Arg-632, Arg-637, Arg-795, and 876-877 (SR).

This sequence belongs to the aconitase/IPM isomerase family. In terms of assembly, monomer. Interacts with B'GAMMA in the cytosol. Requires [4Fe-4S] cluster as cofactor. In terms of processing, phosphorylated at Ser-91 in the cytoplasm; this phosphorylation requires the presence of B'GAMMA. In terms of tissue distribution, major aconitase isoenzyme in young seedlings. Expressed in roots, leaves, stems and flowers, and, at low levels, in seeds.

The protein resides in the mitochondrion. It is found in the cytoplasm. It catalyses the reaction citrate = D-threo-isocitrate. The protein operates within carbohydrate metabolism; tricarboxylic acid cycle; isocitrate from oxaloacetate: step 2/2. Functionally, catalyzes the isomerization of citrate to isocitrate via cis-aconitate. Contributes to oxidative stress tolerance. Modulates cytosolic citrate metabolism during lipid mobilization. Required during seedling growth. This chain is Aconitate hydratase 3, mitochondrial, found in Arabidopsis thaliana (Mouse-ear cress).